Consider the following 757-residue polypeptide: Mitofusin-2 (757 aa).

The Cytoplasmic segment spans residues 1–604 (MSLLFSRCNS…TQEELMVSMV (604 aa)). Residues 30–94 (KHFVTAKKKI…VRGISEVLAR (65 aa)) form a part of a helix bundle domain, formed by helices from N-terminal and C-terminal regions region. The Dynamin-type G domain maps to 93 to 342 (ARRHMKVAFF…VRMFEFQNFE (250 aa)). Residues 103 to 110 (GRTSNGKS) are G1 motif. 106-111 (SNGKST) is a binding site for GTP. Thr-111 carries the phosphothreonine; by PINK1 modification. The G2 motif stretch occupies residues 129 to 130 (TT). The segment at 199 to 202 (DSPG) is G3 motif. 258 to 261 (NRWD) contributes to the GTP binding site. The G4 motif stretch occupies residues 258–261 (NRWD). A region of interest (G5 motif) is located at residue Glu-288. The GTP site is built by Ser-305 and Lys-307. Residues 359–385 (EQHTVRAKQIAEAVRLIMDSLHIAAQE) are part of a helix bundle domain, formed by helices from N-terminal and C-terminal regions. Positions 406–434 (KQLELLAQDYKLRIKQITEEVERQVSTAM) form a coiled coil. Ser-442 is subject to Phosphoserine. The helical transmembrane segment at 605-625 (TGLASLTSRTSMGILVVGGVV) threads the bilayer. Trp-626 is a topological domain (mitochondrial intermembrane). The helical transmembrane segment at 627-647 (KAVGWRLIALSFGLYGLLYVY) threads the bilayer. The Cytoplasmic portion of the chain corresponds to 648 to 757 (ERLTWTTKAK…FTHQYLQPSR (110 aa)). Residues 696–738 (FAHLCQQVDITRDNLEQEIAAMNKKVEALDSLQSRAKLLRNKA) adopt a coiled-coil conformation. Residues 722–753 (EALDSLQSRAKLLRNKAGWLDSELNMFTHQYL) are part of a helix bundle domain, formed by helices from N-terminal and C-terminal regions.

Belongs to the TRAFAC class dynamin-like GTPase superfamily. Dynamin/Fzo/YdjA family. Mitofusin subfamily. In terms of assembly, forms homomultimers and heteromultimers with MFN1. Oligomerization is essential for mitochondrion fusion. Interacts with VAT1. Interacts with STOML2; may form heterooligomers. Interacts (phosphorylated) with PRKN. Interacts with EIF2AK3. Interacts with THG1L; THG1L probably functions as a guanyl-nucleotide exchange factor/GEF, activating MFN2. Phosphorylated by PINK1. Post-translationally, ubiquitinated by non-degradative ubiquitin by PRKN, promoting mitochondrial fusion; deubiquitination by USP30 inhibits mitochondrial fusion. Ubiquitinated by HUWE1 when dietary stearate (C18:0) levels are low; ubiquitination inhibits mitochondrial fusion. As to expression, ubiquitous. Expression is markedly reduced in ApoE-knockout mouse atherosclerotic arteries.

The protein localises to the mitochondrion outer membrane. It catalyses the reaction GTP + H2O = GDP + phosphate + H(+). Functionally, mitochondrial outer membrane GTPase that mediates mitochondrial clustering and fusion. Mitochondria are highly dynamic organelles, and their morphology is determined by the equilibrium between mitochondrial fusion and fission events. Overexpression induces the formation of mitochondrial networks. Membrane clustering requires GTPase activity and may involve a major rearrangement of the coiled coil domains. Plays a central role in mitochondrial metabolism and may be associated with obesity and/or apoptosis processes. Plays an important role in the regulation of vascular smooth muscle cell proliferation. Involved in the clearance of damaged mitochondria via selective autophagy (mitophagy). Is required for PRKN recruitment to dysfunctional mitochondria. Involved in the control of unfolded protein response (UPR) upon ER stress including activation of apoptosis and autophagy during ER stress. Acts as an upstream regulator of EIF2AK3 and suppresses EIF2AK3 activation under basal conditions. This Mus musculus (Mouse) protein is Mitofusin-2 (Mfn2).